Here is a 490-residue protein sequence, read N- to C-terminus: Cytochrome P450 90D2 (490 aa).

The chain crosses the membrane as a helical span at residues 4-24; it reads AAAGWAAPAFAVAAVVIWVVL. Cys-437 is a heme binding site.

This sequence belongs to the cytochrome P450 family. Heme is required as a cofactor.

The protein resides in the membrane. The catalysed reaction is 6-deoxoteasterone + reduced [NADPH--hemoprotein reductase] + O2 = 3-dehydro-6-deoxoteasterone + oxidized [NADPH--hemoprotein reductase] + 2 H2O + H(+). Its pathway is plant hormone biosynthesis; brassinosteroid biosynthesis. Its function is as follows. Catalyzes the C6-oxidation step in brassinosteroids biosynthesis. May convert 6-deoxoteasterone (6-deoxoTE) to 3-dehydro-6-deoxoteasterone (6-deoxo3DT, 6-deoxo3DHT), and teasterone (TE) to 3-dehydroteasterone (3DT, 3-DHT). Involved in the elongation of leaf sheaths and stems. This is Cytochrome P450 90D2 from Oryza sativa subsp. indica (Rice).